A 261-amino-acid chain; its full sequence is tRNA pseudouridine synthase A (261 aa).

The active-site Nucleophile is the aspartate 52. Residue tyrosine 111 participates in substrate binding.

The protein belongs to the tRNA pseudouridine synthase TruA family. Homodimer.

The catalysed reaction is uridine(38/39/40) in tRNA = pseudouridine(38/39/40) in tRNA. Functionally, formation of pseudouridine at positions 38, 39 and 40 in the anticodon stem and loop of transfer RNAs. This Jannaschia sp. (strain CCS1) protein is tRNA pseudouridine synthase A.